We begin with the raw amino-acid sequence, 125 residues long: Small ribosomal subunit protein bS6 (125 aa).

The protein belongs to the bacterial ribosomal protein bS6 family.

In terms of biological role, binds together with bS18 to 16S ribosomal RNA. The sequence is that of Small ribosomal subunit protein bS6 from Campylobacter jejuni (strain RM1221).